A 405-amino-acid chain; its full sequence is CMP-sialic acid transporter 5 (405 aa).

Residues 1 to 43 (MQRNGVVECSVCRSRLVVPSPRSVSRAYDKHRSKISSKFRALN) lie on the Cytoplasmic side of the membrane. A helical transmembrane segment spans residues 44–64 (VLLVVGDCILVGLQPILVFMS). Residues 65-74 (KVDGKFQFSP) lie on the Lumenal side of the membrane. A helical membrane pass occupies residues 75–95 (ISVNFLTEVTKVVFAIVMLII). The Cytoplasmic portion of the chain corresponds to 96 to 121 (QSRKQKVGEKPLLARSTFIQAARNNA). The chain crosses the membrane as a helical span at residues 122-142 (LLAVPALLYAINNYLKFIMQL). Residues 143–147 (YFNPS) are Lumenal-facing. A helical membrane pass occupies residues 148-168 (TVKMLSNLKVLVIAVLLKFIM). At 169–171 (KRR) the chain is on the cytoplasmic side. Residues 172 to 192 (FSVIQWEALALLLIGISINQL) form a helical membrane-spanning segment. Residues 193–200 (RTVPAGNT) are Lumenal-facing. The helical transmembrane segment at 201–221 (AFGLPVTAIAYIYTLIFVTVP) threads the bilayer. The Cytoplasmic portion of the chain corresponds to 222–244 (SLASVYNEYALKSQYDTSIYLQN). The chain crosses the membrane as a helical span at residues 245-265 (LFLYGYGAIFNFLGILGTALF). At 266–281 (QGPESFNILRGHSRAT) the chain is on the lumenal side. Residues 282-302 (MFLICNNAAQGILSSFFFKYA) form a helical membrane-spanning segment. The Cytoplasmic segment spans residues 303–322 (DTILKKYSSTVATIFTGLAS). The chain crosses the membrane as a helical span at residues 323–343 (AAFLGHTLTINFLLGISVVFI). Topologically, residues 344 to 405 (SMHQFFSPLA…TDERQPLLPT (62 aa)) are lumenal. A disordered region spans residues 368–405 (DTQNHRSSESSFVNMTAGAAEDASHRIGTDERQPLLPT). Residues 389–405 (DASHRIGTDERQPLLPT) show a composition bias toward basic and acidic residues.

Belongs to the nucleotide-sugar transporter family. CMP-Sialate:CMP antiporter (TC 2.A.7.12) subfamily.

It localises to the golgi apparatus membrane. Sugar transporter involved in the transport of CMP-sialic acid from the cytoplasm into the Golgi. May transport important nucleotide sugars such as CMP-Kdo (2-keto-3-deoxy-D-manno-octulosonic acid) in physiological conditions. This is CMP-sialic acid transporter 5 from Oryza sativa subsp. japonica (Rice).